The chain runs to 146 residues: Large-conductance mechanosensitive channel (146 aa).

The next 3 helical transmembrane spans lie at 21-41, 44-64, and 83-103; these read VGIIIGAAFTGIVSSLVADLI, VIGLITGGIDFSNVFVNLGDG, and GAFITAVINFLIIAWVVFLLV.

This sequence belongs to the MscL family. Homopentamer.

It localises to the cell inner membrane. Functionally, channel that opens in response to stretch forces in the membrane lipid bilayer. May participate in the regulation of osmotic pressure changes within the cell. In Cereibacter sphaeroides (strain ATCC 17025 / ATH 2.4.3) (Rhodobacter sphaeroides), this protein is Large-conductance mechanosensitive channel.